A 270-amino-acid polypeptide reads, in one-letter code: Formamidopyrimidine-DNA glycosylase (270 aa).

Pro-2 serves as the catalytic Schiff-base intermediate with DNA. Glu-3 acts as the Proton donor in catalysis. The active-site Proton donor; for beta-elimination activity is the Lys-58. Positions 91, 110, and 151 each coordinate DNA. The segment at 236–270 adopts an FPG-type zinc-finger fold; it reads FAYGRAGEFCKVCGTTLREVKLGQRASVYCPRCQR. The active-site Proton donor; for delta-elimination activity is Arg-260.

This sequence belongs to the FPG family. In terms of assembly, monomer. Requires Zn(2+) as cofactor.

It carries out the reaction Hydrolysis of DNA containing ring-opened 7-methylguanine residues, releasing 2,6-diamino-4-hydroxy-5-(N-methyl)formamidopyrimidine.. It catalyses the reaction 2'-deoxyribonucleotide-(2'-deoxyribose 5'-phosphate)-2'-deoxyribonucleotide-DNA = a 3'-end 2'-deoxyribonucleotide-(2,3-dehydro-2,3-deoxyribose 5'-phosphate)-DNA + a 5'-end 5'-phospho-2'-deoxyribonucleoside-DNA + H(+). Involved in base excision repair of DNA damaged by oxidation or by mutagenic agents. Acts as a DNA glycosylase that recognizes and removes damaged bases. Has a preference for oxidized purines, such as 7,8-dihydro-8-oxoguanine (8-oxoG). Has AP (apurinic/apyrimidinic) lyase activity and introduces nicks in the DNA strand. Cleaves the DNA backbone by beta-delta elimination to generate a single-strand break at the site of the removed base with both 3'- and 5'-phosphates. The polypeptide is Formamidopyrimidine-DNA glycosylase (Ectopseudomonas mendocina (strain ymp) (Pseudomonas mendocina)).